A 256-amino-acid chain; its full sequence is Ribonuclease HII (256 aa).

One can recognise an RNase H type-2 domain in the interval 72–256 (QYVAGIDEVG…TFRPVPDYVN (185 aa)). Residues D78, E79, and D170 each contribute to the a divalent metal cation site.

It belongs to the RNase HII family. It depends on Mn(2+) as a cofactor. Mg(2+) serves as cofactor.

It is found in the cytoplasm. The catalysed reaction is Endonucleolytic cleavage to 5'-phosphomonoester.. In terms of biological role, endonuclease that specifically degrades the RNA of RNA-DNA hybrids. This chain is Ribonuclease HII, found in Limosilactobacillus fermentum (strain NBRC 3956 / LMG 18251) (Lactobacillus fermentum).